A 317-amino-acid chain; its full sequence is Acetyl-coenzyme A carboxylase carboxyl transferase subunit alpha (317 aa).

The region spanning 33–294 (NLDDEITRLQ…KKRLLADLAD (262 aa)) is the CoA carboxyltransferase C-terminal domain.

It belongs to the AccA family. As to quaternary structure, acetyl-CoA carboxylase is a heterohexamer composed of biotin carboxyl carrier protein (AccB), biotin carboxylase (AccC) and two subunits each of ACCase subunit alpha (AccA) and ACCase subunit beta (AccD).

Its subcellular location is the cytoplasm. It catalyses the reaction N(6)-carboxybiotinyl-L-lysyl-[protein] + acetyl-CoA = N(6)-biotinyl-L-lysyl-[protein] + malonyl-CoA. The protein operates within lipid metabolism; malonyl-CoA biosynthesis; malonyl-CoA from acetyl-CoA: step 1/1. Its function is as follows. Component of the acetyl coenzyme A carboxylase (ACC) complex. First, biotin carboxylase catalyzes the carboxylation of biotin on its carrier protein (BCCP) and then the CO(2) group is transferred by the carboxyltransferase to acetyl-CoA to form malonyl-CoA. The chain is Acetyl-coenzyme A carboxylase carboxyl transferase subunit alpha from Histophilus somni (strain 129Pt) (Haemophilus somnus).